We begin with the raw amino-acid sequence, 146 residues long: Leghemoglobin alpha (146 aa).

In terms of domain architecture, Globin spans 3–146; that stretch reads AFTEKQEALV…LAAAIKKAYA (144 aa). A nitrated tyrosine mark is found at Tyr-26 and Tyr-31. Position 46 (Ser-46) interacts with heme b. At Ser-46 the chain carries Phosphoserine. Residue His-62 participates in O2 binding. 2 residues coordinate heme b: His-93 and Lys-96. Tyr-134 is modified (nitrated tyrosine).

The protein belongs to the plant globin family. In terms of assembly, monomer. Nitrated mainly at Tyr-31 and, to a lower extent, at Tyr-26 and Tyr-134, in effective nodules and particularly in hypoxic conditions; this mechanism may play a protective role in the symbiosis by buffering toxic peroxynitrite NO(2)(-). Nitration level decrease during nodule senescence. Post-translationally, phosphorylation at Ser-46 disrupts the molecular environment of its porphyrin ring oxygen binding pocket, thus leading to a reduced oxygen consumption and to the delivery of oxygen O(2) to symbiosomes. In terms of tissue distribution, root nodules.

Its subcellular location is the cytoplasm. It is found in the cytosol. It localises to the nucleus. In terms of biological role, leghemoglobin that reversibly binds oxygen O(2) through a pentacoordinated heme iron. In root nodules, facilitates the diffusion of oxygen to the bacteroids while preventing the bacterial nitrogenase from being inactivated by buffering dioxygen, nitric oxide and carbon monoxide, and promoting the formation of reactive oxygen species (ROS, e.g. H(2)O(2)). This role is essential for symbiotic nitrogen fixation (SNF). This is Leghemoglobin alpha from Phaseolus vulgaris (Kidney bean).